We begin with the raw amino-acid sequence, 433 residues long: Protein RETICULATA-RELATED 1, chloroplastic (433 aa).

The N-terminal 63 residues, 1 to 63 (MSISLKISHI…LSSRNLRNRC (63 aa)), are a transit peptide targeting the chloroplast. Val-64 is modified (N-acetylvaline). The segment covering 93-105 (DLEPELDDGDGGD) has biased composition (acidic residues). The segment at 93 to 143 (DLEPELDDGDGGDENGNNDGGGNGGNGDGGGGGGDGEGDDGEDEADKAEEK) is disordered. Gly residues predominate over residues 110 to 127 (NDGGGNGGNGDGGGGGGD). Residues 128-139 (GEGDDGEDEADK) show a composition bias toward acidic residues. The next 2 membrane-spanning stretches (helical) occupy residues 249 to 269 (LYAA…GLLA) and 323 to 343 (LLYG…ANLI).

It belongs to the RETICULATA family. Expressed in root vasculature, distal region of young leaf primordia, leaf bundle sheath cells, hydathodes and pollen grains.

The protein localises to the plastid. Its subcellular location is the chloroplast membrane. Functionally, may play a role in leaf development. This is Protein RETICULATA-RELATED 1, chloroplastic from Arabidopsis thaliana (Mouse-ear cress).